Here is a 448-residue protein sequence, read N- to C-terminus: Nicotinate phosphoribosyltransferase pncB1 (448 aa).

The interval 1 to 21 is disordered; sequence MGPPPAARRREGEPDNQDPAG. His212 is modified (phosphohistidine). The interval 353-372 is disordered; the sequence is RSSYKESPGGRKEALRRSRA.

This sequence belongs to the NAPRTase family. In terms of processing, transiently phosphorylated on a His residue during the reaction cycle. Phosphorylation strongly increases the affinity for substrates and increases the rate of nicotinate D-ribonucleotide production. Dephosphorylation regenerates the low-affinity form of the enzyme, leading to product release.

The enzyme catalyses nicotinate + 5-phospho-alpha-D-ribose 1-diphosphate + ATP + H2O = nicotinate beta-D-ribonucleotide + ADP + phosphate + diphosphate. It participates in cofactor biosynthesis; NAD(+) biosynthesis; nicotinate D-ribonucleotide from nicotinate: step 1/1. Functionally, involved in the Preiss-Handler pathway, which is a recycling route that permits the salvage of free nicotinamide (NM) and nicotinic acid (Na) involved in the NAD biosynthesis. Catalyzes the synthesis of beta-nicotinate D-ribonucleotide from nicotinate and 5-phospho-D-ribose 1-phosphate at the expense of ATP. It is not able to use nicotinamide. PncB1 contributes to basal NAD level. The chain is Nicotinate phosphoribosyltransferase pncB1 (pncB1) from Mycobacterium tuberculosis (strain CDC 1551 / Oshkosh).